The following is a 124-amino-acid chain: Large ribosomal subunit protein bL12 (124 aa).

It belongs to the bacterial ribosomal protein bL12 family. As to quaternary structure, homodimer. Part of the ribosomal stalk of the 50S ribosomal subunit. Forms a multimeric L10(L12)X complex, where L10 forms an elongated spine to which 2 to 4 L12 dimers bind in a sequential fashion. Binds GTP-bound translation factors.

Its function is as follows. Forms part of the ribosomal stalk which helps the ribosome interact with GTP-bound translation factors. Is thus essential for accurate translation. This Cupriavidus pinatubonensis (strain JMP 134 / LMG 1197) (Cupriavidus necator (strain JMP 134)) protein is Large ribosomal subunit protein bL12.